A 1081-amino-acid polypeptide reads, in one-letter code: Inversin (1081 aa).

ANK repeat units follow at residues 13–42, 47–76, 80–110, 113–144, 148–177, 181–213, 220–250, 254–283, 288–317, 321–350, 356–385, 389–418, 422–451, 455–484, 488–517, and 523–553; these read SLAS…ALKD, FGRT…DVNK, SQRT…WMQK, EEMT…EVDT, NKQT…NIGI, EGKI…TESL, EGRT…NITS, LFRT…SGTI, QGAT…VKDD, EGRT…DIDI, YGGT…QVDA, MKHT…RVDL, DGHS…NPNV, AGRT…DPNI, EGRT…FPNQ, and ERYT…SIAA. A 3-hydroxyasparagine modification is found at asparagine 75. Positions 490–498 match the D-box 1 motif; the sequence is RTALHWSCN. The IQ 1 domain occupies 555–584; that stretch reads QDIAAFKIQAVYKGYKVRKAFRDRKNLLMK. The span at 589-610 shows a compositional bias: basic and acidic residues; sequence RKDAAAKKREEENKRREAEQQK. The tract at residues 589 to 889 is disordered; that stretch reads RKDAAAKKRE…PAPGPLSGQS (301 aa). Positions 638–649 are enriched in polar residues; the sequence is RAPSKQPPSSEA. Basic and acidic residues-rich tracts occupy residues 688–698, 724–740, and 772–785; these read KPNESPREQCK, EKSR…DKGK, and DGHR…DTAS. Positions 863-872 are enriched in polar residues; sequence SGTSTLSEDA. The D-box 2 motif lies at 910–918; it reads RKELFRKKN. The IQ 2 domain maps to 917 to 946; sequence KNKAAAVIQRAWRSYQLRKHLSHLLHMKEL. An ANK 17 repeat occupies 1022 to 1050; sequence RTHSVLHLNSVSNLQCIHLLENSGRSKNF. A compositionally biased stretch (polar residues) spans 1051–1061; sequence SYNLQSATPPK. The disordered stretch occupies residues 1051 to 1081; that stretch reads SYNLQSATPPKTKTKLRPSLEEECVRGSWNS.

As to quaternary structure, binds calmodulin via its IQ domains. Interacts with APC2. Interacts with alpha-, beta-, and gamma-catenin. Interacts with N-cadherin (CDH2). Interacts with NPHP1. Interacts with DVL1, PRICKLE (PRICKLE1 or PRICKLE2) and Strabismus (VANGL1 or VANGL2). Component of a complex containing at least ANKS6, INVS, NEK8 and NPHP3. ANKS6 may organize complex assembly by linking INVS and NPHP3 to NEK8 and INVS may target the complex to the proximal ciliary axoneme. Interacts with IQCB1; the interaction likely requires additional interactors. Interacts with microtubules. In terms of processing, may be ubiquitinated via its interaction with APC2. Hydroxylated at Asn-75, most probably by HIF1AN.

The protein resides in the cytoplasm. The protein localises to the cytoskeleton. It is found in the membrane. It localises to the spindle. Its subcellular location is the nucleus. Required for normal renal development and establishment of left-right axis. Probably acts as a molecular switch between different Wnt signaling pathways. Inhibits the canonical Wnt pathway by targeting cytoplasmic disheveled (DVL1) for degradation by the ubiquitin-proteasome. This suggests that it is required in renal development to oppose the repression of terminal differentiation of tubular epithelial cells by Wnt signaling. Involved in the organization of apical junctions in kidney cells together with NPHP1, NPHP4 and RPGRIP1L/NPHP8. Does not seem to be strictly required for ciliogenesis. This chain is Inversin (INVS), found in Canis lupus familiaris (Dog).